A 166-amino-acid chain; its full sequence is Ubiquitin-conjugating enzyme E2 13 (166 aa).

The UBC core domain maps to 4 to 164 (QACLLLQKQL…VSRCVRKSQE (161 aa)). Cys89 functions as the Glycyl thioester intermediate in the catalytic mechanism.

It belongs to the ubiquitin-conjugating enzyme family.

The catalysed reaction is S-ubiquitinyl-[E1 ubiquitin-activating enzyme]-L-cysteine + [E2 ubiquitin-conjugating enzyme]-L-cysteine = [E1 ubiquitin-activating enzyme]-L-cysteine + S-ubiquitinyl-[E2 ubiquitin-conjugating enzyme]-L-cysteine.. The protein operates within protein modification; protein ubiquitination. In terms of biological role, accepts the ubiquitin from the E1 complex and catalyzes its covalent attachment to other proteins. Involved in the formation of multiubiquitin chains. Signal the protein for selective degradation. The chain is Ubiquitin-conjugating enzyme E2 13 (UBC13) from Arabidopsis thaliana (Mouse-ear cress).